The primary structure comprises 123 residues: Hydrogenase maturation factor HypA (123 aa).

Residue His2 coordinates Ni(2+). Cys73, Cys76, Cys90, and Cys93 together coordinate Zn(2+).

Belongs to the HypA/HybF family.

In terms of biological role, involved in the maturation of [NiFe] hydrogenases. Required for nickel insertion into the metal center of the hydrogenase. In Roseiflexus sp. (strain RS-1), this protein is Hydrogenase maturation factor HypA.